The following is a 240-amino-acid chain: Mediator of RNA polymerase II transcription subunit 19-B (240 aa).

A compositionally biased stretch (polar residues) spans 1–14 (MTEIFSSLYGQPDS). Disordered regions lie at residues 1–29 (MTEI…GSGK) and 168–240 (PKKK…SSLR). 2 stretches are compositionally biased toward basic residues: residues 168-180 (PKKK…KHHR) and 209-221 (KKKK…KKNR).

Belongs to the Mediator complex subunit 19 family. In terms of assembly, component of the Mediator complex.

Its subcellular location is the nucleus. In terms of biological role, component of the Mediator complex, a coactivator involved in the regulated transcription of nearly all RNA polymerase II-dependent genes. Mediator functions as a bridge to convey information from gene-specific regulatory proteins to the basal RNA polymerase II transcription machinery. Mediator is recruited to promoters by direct interactions with regulatory proteins and serves as a scaffold for the assembly of a functional preinitiation complex with RNA polymerase II and the general transcription factors. In Danio rerio (Zebrafish), this protein is Mediator of RNA polymerase II transcription subunit 19-B (med19b).